Consider the following 335-residue polypeptide: MSWPTFWYQTPKQSWKTALLWPVGKLVCWVAARRLKRFKKKGPSKITAAQVVVIGNIVVGGSGKTPFIQWLGRQLSEHGLTFGVVSRGYGGQSKVWPQWVTEHSEPTMVGDEPVLLAQSLHCPVAVSPNRADAIALLESKYDLDVIISDDGLQHYKMARDIEIVMMDSERLLGNEYCLPAGPLRESKRRLGLVDFVVWNGGDASDLASETSTIMKLVPQHFRSVANPKMILPISSFKHEKTNAMAGIGNPQRFFNTLSELGIDADVTPFADHKAFQSSDFDTFESTKPLLMTEKDAVKCRAFAQPNWWYLEVQPLCPATFAHQLFHKLGHYDFTI.

58–65 (VVGGSGKT) serves as a coordination point for ATP.

This sequence belongs to the LpxK family.

The catalysed reaction is a lipid A disaccharide + ATP = a lipid IVA + ADP + H(+). It functions in the pathway glycolipid biosynthesis; lipid IV(A) biosynthesis; lipid IV(A) from (3R)-3-hydroxytetradecanoyl-[acyl-carrier-protein] and UDP-N-acetyl-alpha-D-glucosamine: step 6/6. In terms of biological role, transfers the gamma-phosphate of ATP to the 4'-position of a tetraacyldisaccharide 1-phosphate intermediate (termed DS-1-P) to form tetraacyldisaccharide 1,4'-bis-phosphate (lipid IVA). This Hydrogenovibrio crunogenus (strain DSM 25203 / XCL-2) (Thiomicrospira crunogena) protein is Tetraacyldisaccharide 4'-kinase.